Here is a 323-residue protein sequence, read N- to C-terminus: L-lactate dehydrogenase (323 aa).

NAD(+) contacts are provided by residues V16, N37, and 81–82 (GA). Substrate is bound by residues Q84, R90, and 122 to 125 (NPVD). NAD(+)-binding positions include 120 to 122 (ATN) and S145. Residue 150-153 (DSAR) coordinates substrate. The active-site Proton acceptor is H177. Y221 is subject to Phosphotyrosine. T230 is a binding site for substrate.

The protein belongs to the LDH/MDH superfamily. LDH family. In terms of assembly, homotetramer.

The protein localises to the cytoplasm. It carries out the reaction (S)-lactate + NAD(+) = pyruvate + NADH + H(+). The protein operates within fermentation; pyruvate fermentation to lactate; (S)-lactate from pyruvate: step 1/1. Functionally, catalyzes the conversion of lactate to pyruvate. This chain is L-lactate dehydrogenase, found in Limosilactobacillus reuteri (Lactobacillus reuteri).